Consider the following 321-residue polypeptide: Glucokinase (321 aa).

8–13 (GDVGGT) contributes to the ATP binding site.

This sequence belongs to the bacterial glucokinase family.

It localises to the cytoplasm. The catalysed reaction is D-glucose + ATP = D-glucose 6-phosphate + ADP + H(+). The polypeptide is Glucokinase (Pectobacterium atrosepticum (strain SCRI 1043 / ATCC BAA-672) (Erwinia carotovora subsp. atroseptica)).